Reading from the N-terminus, the 483-residue chain is GDP-fucose protein O-fucosyltransferase 4 (483 aa).

Residue M1 is a topological domain, cytoplasmic. The helical; Signal-anchor for type II membrane protein transmembrane segment at 2–21 (ALCLWLFLVLPICCWCQGAV) threads the bilayer. The Lumenal segment spans residues 22 to 483 (DLGDSGVFQP…RARGLSNDSR (462 aa)). N151 and N303 each carry an N-linked (GlcNAc...) asparagine glycan. An intrachain disulfide couples C374 to C377. Positions 387-425 (RKAHRKNPKQNQPPQPKMANSSHMGCPLPSPGYGPVENV) are disordered. N-linked (GlcNAc...) asparagine glycosylation is found at N406, N428, N456, and N480.

It belongs to the glycosyltransferase 10 family.

It localises to the endoplasmic reticulum membrane. The catalysed reaction is L-threonyl-[protein] + GDP-beta-L-fucose = 3-O-(alpha-L-fucosyl)-L-threonyl-[protein] + GDP + H(+). It carries out the reaction L-seryl-[protein] + GDP-beta-L-fucose = 3-O-(alpha-L-fucosyl)-L-seryl-[protein] + GDP + H(+). Its pathway is protein modification; protein glycosylation. Functionally, protein O-fucosyltransferase that specifically catalyzes O-fucosylation of serine or threonine residues in EMI domains of target proteins. Attaches fucose through an O-glycosidic linkage. O-fucosylation of EMI domain-containing proteins may be required for facilitating protein folding and secretion. The polypeptide is GDP-fucose protein O-fucosyltransferase 4 (fut11) (Danio rerio (Zebrafish)).